The chain runs to 155 residues: MEAPPKCALKFSNYIVKHIEFILNEVPEKDEKIRLNVNIDTEIRYNKNEPNKFITIIKITAGEKKDFAKSPVYLSVEVWGFFEVIEEAIDKVRQFAEINSVAILFPYVRALISTITANANIPPVILPPINVAGMMANIEEVKEENTEKQETEAYE.

This is an uncharacterized protein from Methanocaldococcus jannaschii (strain ATCC 43067 / DSM 2661 / JAL-1 / JCM 10045 / NBRC 100440) (Methanococcus jannaschii).